Consider the following 241-residue polypeptide: Ubiquinone biosynthesis O-methyltransferase (241 aa).

Residues Arg46, Gly66, Asp87, and Met131 each coordinate S-adenosyl-L-methionine.

It belongs to the methyltransferase superfamily. UbiG/COQ3 family.

It catalyses the reaction a 3-demethylubiquinol + S-adenosyl-L-methionine = a ubiquinol + S-adenosyl-L-homocysteine + H(+). The catalysed reaction is a 3-(all-trans-polyprenyl)benzene-1,2-diol + S-adenosyl-L-methionine = a 2-methoxy-6-(all-trans-polyprenyl)phenol + S-adenosyl-L-homocysteine + H(+). The protein operates within cofactor biosynthesis; ubiquinone biosynthesis. Functionally, O-methyltransferase that catalyzes the 2 O-methylation steps in the ubiquinone biosynthetic pathway. This Bordetella bronchiseptica (strain ATCC BAA-588 / NCTC 13252 / RB50) (Alcaligenes bronchisepticus) protein is Ubiquinone biosynthesis O-methyltransferase.